Here is a 1213-residue protein sequence, read N- to C-terminus: Formin (1213 aa).

Disordered stretches follow at residues 1-24 (MEGG…SEPD), 66-111 (QANN…EPEP), 144-169 (VHTT…TSKC), 183-216 (GNNQ…PISQ), and 357-489 (DVSK…PKAN). 2 stretches are compositionally biased toward basic and acidic residues: residues 187-210 (SKEE…DTEL) and 431-464 (EAIK…DKSP). 2 coiled-coil regions span residues 428–450 (SELE…VFER) and 503–572 (EYQA…IGVS). The interval 624 to 774 (ISTQGENKDS…PRKPAIEPSR (151 aa)) is disordered. The span at 636–647 (VPSSESVLSCQP) shows a compositional bias: polar residues. 3 stretches are compositionally biased toward pro residues: residues 650 to 672 (MLPP…PPPF), 680 to 689 (LVPPPPPLPT), and 718 to 751 (PAPP…PPGP). The region spanning 652 to 751 (PPSPPPPPPP…LPPPPPPPGP (100 aa)) is the FH1 domain. Over residues 755–764 (FNSTLSSSQG) the composition is skewed to polar residues. In terms of domain architecture, FH2 spans 766 to 1182 (RKPAIEPSRP…KVAQQSVSKL (417 aa)). Positions 1050–1125 (FQASQVKFED…ENAQKCFEET (76 aa)) form a coiled coil. Residues 1193–1213 (INPTASLKERLRQKEANVNAN) are disordered.

It belongs to the formin homology family. Cappuccino subfamily. Present in the adult brain, kidney, brain, heart and intestine and throughout the embryo.

It localises to the nucleus. Is important for morphogenesis of limb and kidney and may be involved in determining dorsoventral neural tube polarity and motor neuron induction. It may also have a function in differentiated cells or be involved in maintaining specific differentiated states. The chain is Formin (LD) from Gallus gallus (Chicken).